The sequence spans 997 residues: Phosphoenolpyruvate carboxylase (997 aa).

The segment at 1-67 (MKSSGSARTA…KPAARTREDK (67 aa)) is disordered. Active-site residues include His-207 and Lys-649.

This sequence belongs to the PEPCase type 1 family. It depends on Mg(2+) as a cofactor.

It catalyses the reaction oxaloacetate + phosphate = phosphoenolpyruvate + hydrogencarbonate. In terms of biological role, forms oxaloacetate, a four-carbon dicarboxylic acid source for the tricarboxylic acid cycle. The sequence is that of Phosphoenolpyruvate carboxylase from Burkholderia vietnamiensis (strain G4 / LMG 22486) (Burkholderia cepacia (strain R1808)).